Reading from the N-terminus, the 228-residue chain is Phosphoglycolate phosphatase (228 aa).

Asp-12 serves as the catalytic Nucleophile. 3 residues coordinate Mg(2+): Asp-12, Asp-14, and Asp-177.

It belongs to the HAD-like hydrolase superfamily. CbbY/CbbZ/Gph/YieH family. Mg(2+) is required as a cofactor.

It catalyses the reaction 2-phosphoglycolate + H2O = glycolate + phosphate. The protein operates within organic acid metabolism; glycolate biosynthesis; glycolate from 2-phosphoglycolate: step 1/1. Functionally, specifically catalyzes the dephosphorylation of 2-phosphoglycolate. Is involved in the dissimilation of the intracellular 2-phosphoglycolate formed during the DNA repair of 3'-phosphoglycolate ends, a major class of DNA lesions induced by oxidative stress. The chain is Phosphoglycolate phosphatase from Vibrio parahaemolyticus serotype O3:K6 (strain RIMD 2210633).